The primary structure comprises 551 residues: Chaperonin GroEL (551 aa).

Residues 30-33, lysine 51, 87-91, glycine 415, 478-480, and aspartate 494 contribute to the ATP site; these read TLGP, DGTTT, and NAA.

The protein belongs to the chaperonin (HSP60) family. In terms of assembly, forms a cylinder of 14 subunits composed of two heptameric rings stacked back-to-back. Interacts with the co-chaperonin GroES.

It localises to the cytoplasm. The enzyme catalyses ATP + H2O + a folded polypeptide = ADP + phosphate + an unfolded polypeptide.. Functionally, together with its co-chaperonin GroES, plays an essential role in assisting protein folding. The GroEL-GroES system forms a nano-cage that allows encapsulation of the non-native substrate proteins and provides a physical environment optimized to promote and accelerate protein folding. The sequence is that of Chaperonin GroEL from Syntrophotalea carbinolica (strain DSM 2380 / NBRC 103641 / GraBd1) (Pelobacter carbinolicus).